We begin with the raw amino-acid sequence, 166 residues long: Transcription antitermination protein NusB (166 aa).

Belongs to the NusB family.

Functionally, involved in transcription antitermination. Required for transcription of ribosomal RNA (rRNA) genes. Binds specifically to the boxA antiterminator sequence of the ribosomal RNA (rrn) operons. The polypeptide is Transcription antitermination protein NusB (Chromohalobacter salexigens (strain ATCC BAA-138 / DSM 3043 / CIP 106854 / NCIMB 13768 / 1H11)).